The sequence spans 79 residues: Acyl carrier protein (79 aa).

The Carrier domain occupies 2-77 (DNIEQRVKKI…LAIDFAKSKA (76 aa)). An O-(pantetheine 4'-phosphoryl)serine modification is found at S37.

The protein belongs to the acyl carrier protein (ACP) family. 4'-phosphopantetheine is transferred from CoA to a specific serine of apo-ACP by AcpS. This modification is essential for activity because fatty acids are bound in thioester linkage to the sulfhydryl of the prosthetic group.

Its subcellular location is the cytoplasm. It participates in lipid metabolism; fatty acid biosynthesis. In terms of biological role, carrier of the growing fatty acid chain in fatty acid biosynthesis. The protein is Acyl carrier protein of Polynucleobacter necessarius subsp. necessarius (strain STIR1).